The sequence spans 640 residues: Cytochrome P450 monooxygenase cyp1 (640 aa).

Residue Asn71 is glycosylated (N-linked (GlcNAc...) asparagine). The chain crosses the membrane as a helical span at residues 120–139; that stretch reads LLVFLVGLFLGTIYLLYRYW. Asn350 carries an N-linked (GlcNAc...) asparagine glycan. Cys572 contributes to the heme binding site.

Belongs to the cytochrome P450 family. Heme is required as a cofactor.

It is found in the membrane. The protein operates within secondary metabolite biosynthesis. Cytochrome P450 monooxygenase; part of the gene cluster that mediates the biosynthesis of the glycolipid biosurfactant ustilagic acid (UA). UA is a secreted cellobiose glycolipid that is toxic for many microorganisms and confers biocontrol activity to U.maydis. UA consists of 15,16-dihydroxypalmitic or 2,15,16-trihydroxypalmitic acid, which is O-glycosidically linked to cellobiose at its terminal hydroxyl group. In addition, the cellobiose moiety is acetylated and acylated with a short-chain hydroxy fatty acid. UA biosynthesis starts with omega-hydroxylation of palmitic acid catalyzed by the cytochrome P450 monooxygenase cyp1. Terminal hydroxylation of palmitic acid precedes subterminal hydroxylation catalyzed by the cytochrome P450 monooxygenase cyp2. Sequential glucosylation of the hydroxy fatty acid is probably catalyzed by the glycosyltransferase ugt1. The cellobiose lipid is further decorated by acetylation of the proximal glucose residue and by acylation with a short-chain beta-hydroxy fatty acid at the distal glucose residue. The acyltransferase uat1 may be a good candidate for catalyzing either acetylation or acylation of the cellobiose lipid. The fatty acid synthase fas2 may be involved in synthesis of the carbon backbone of the short-chain beta-hydroxy fatty acid esterified to the cellobiose disaccharide. The secreted UA consists of a mixture of both alpha-hydroxylated and non-hydroxylated glycolipids; therefore, alpha-hydroxylation of the long-chain fatty, catalyzed by the fatty acid hydroxylase ahd1, occurs late in UA biosynthesis and may be the last step before secretion. The protein is Cytochrome P450 monooxygenase cyp1 of Mycosarcoma maydis (Corn smut fungus).